The chain runs to 472 residues: UDP-N-acetylmuramate--L-alanine ligase (472 aa).

An ATP-binding site is contributed by 119 to 125 (GTHGKTT).

This sequence belongs to the MurCDEF family.

It localises to the cytoplasm. The enzyme catalyses UDP-N-acetyl-alpha-D-muramate + L-alanine + ATP = UDP-N-acetyl-alpha-D-muramoyl-L-alanine + ADP + phosphate + H(+). It functions in the pathway cell wall biogenesis; peptidoglycan biosynthesis. Cell wall formation. This Caulobacter sp. (strain K31) protein is UDP-N-acetylmuramate--L-alanine ligase.